The following is a 364-amino-acid chain: DNA polymerase IV (364 aa).

The UmuC domain maps to 14 to 198; that stretch reads IIHIDMDAFF…LPVEKFHGVG (185 aa). Mg(2+) contacts are provided by Asp18 and Asp116. Residue Glu117 is part of the active site.

Belongs to the DNA polymerase type-Y family. In terms of assembly, monomer. Requires Mg(2+) as cofactor.

Its subcellular location is the cytoplasm. The catalysed reaction is DNA(n) + a 2'-deoxyribonucleoside 5'-triphosphate = DNA(n+1) + diphosphate. In terms of biological role, poorly processive, error-prone DNA polymerase involved in untargeted mutagenesis. Copies undamaged DNA at stalled replication forks, which arise in vivo from mismatched or misaligned primer ends. These misaligned primers can be extended by PolIV. Exhibits no 3'-5' exonuclease (proofreading) activity. May be involved in translesional synthesis, in conjunction with the beta clamp from PolIII. This Lactococcus lactis subsp. cremoris (strain MG1363) protein is DNA polymerase IV.